Consider the following 429-residue polypeptide: Serine--tRNA ligase (429 aa).

236 to 238 (TGE) is an L-serine binding site. Residue 267-269 (RSE) participates in ATP binding. Residue E290 participates in L-serine binding. 354–357 (EISS) is a binding site for ATP. Residue S390 participates in L-serine binding.

Belongs to the class-II aminoacyl-tRNA synthetase family. Type-1 seryl-tRNA synthetase subfamily. In terms of assembly, homodimer. The tRNA molecule binds across the dimer.

Its subcellular location is the cytoplasm. It catalyses the reaction tRNA(Ser) + L-serine + ATP = L-seryl-tRNA(Ser) + AMP + diphosphate + H(+). It carries out the reaction tRNA(Sec) + L-serine + ATP = L-seryl-tRNA(Sec) + AMP + diphosphate + H(+). Its pathway is aminoacyl-tRNA biosynthesis; selenocysteinyl-tRNA(Sec) biosynthesis; L-seryl-tRNA(Sec) from L-serine and tRNA(Sec): step 1/1. In terms of biological role, catalyzes the attachment of serine to tRNA(Ser). Is also able to aminoacylate tRNA(Sec) with serine, to form the misacylated tRNA L-seryl-tRNA(Sec), which will be further converted into selenocysteinyl-tRNA(Sec). This is Serine--tRNA ligase from Vesicomyosocius okutanii subsp. Calyptogena okutanii (strain HA).